Here is a 217-residue protein sequence, read N- to C-terminus: Probable transaldolase (217 aa).

The active-site Schiff-base intermediate with substrate is Lys-83.

It belongs to the transaldolase family. Type 3B subfamily.

It is found in the cytoplasm. It carries out the reaction D-sedoheptulose 7-phosphate + D-glyceraldehyde 3-phosphate = D-erythrose 4-phosphate + beta-D-fructose 6-phosphate. It functions in the pathway carbohydrate degradation; pentose phosphate pathway; D-glyceraldehyde 3-phosphate and beta-D-fructose 6-phosphate from D-ribose 5-phosphate and D-xylulose 5-phosphate (non-oxidative stage): step 2/3. Transaldolase is important for the balance of metabolites in the pentose-phosphate pathway. This chain is Probable transaldolase, found in Ruegeria pomeroyi (strain ATCC 700808 / DSM 15171 / DSS-3) (Silicibacter pomeroyi).